Here is a 701-residue protein sequence, read N- to C-terminus: Polyribonucleotide nucleotidyltransferase (701 aa).

Mg(2+)-binding residues include aspartate 487 and aspartate 493. The KH domain maps to 554–613 (PTMIAMKIDTDKIRDVIGKGGATIRAICEETKASIDIEDDGSIKIFGETKEAAEAARQRV). One can recognise an S1 motif domain in the interval 623–691 (GKIYVGKVER…NRGRIKLSIK (69 aa)).

This sequence belongs to the polyribonucleotide nucleotidyltransferase family. Component of the RNA degradosome, which is a multiprotein complex involved in RNA processing and mRNA degradation. Requires Mg(2+) as cofactor.

The protein resides in the cytoplasm. The enzyme catalyses RNA(n+1) + phosphate = RNA(n) + a ribonucleoside 5'-diphosphate. Its function is as follows. Involved in mRNA degradation. Catalyzes the phosphorolysis of single-stranded polyribonucleotides processively in the 3'- to 5'-direction. The polypeptide is Polyribonucleotide nucleotidyltransferase (Pseudomonas putida (strain W619)).